The chain runs to 500 residues: Maturase K (500 aa).

Belongs to the intron maturase 2 family. MatK subfamily.

It is found in the plastid. Its subcellular location is the chloroplast. Its function is as follows. Usually encoded in the trnK tRNA gene intron. Probably assists in splicing its own and other chloroplast group II introns. This chain is Maturase K, found in Proboscidea louisianica (Louisiana Devil's-claw).